The chain runs to 191 residues: Imidazoleglycerol-phosphate dehydratase (191 aa).

Belongs to the imidazoleglycerol-phosphate dehydratase family.

The protein localises to the cytoplasm. The enzyme catalyses D-erythro-1-(imidazol-4-yl)glycerol 3-phosphate = 3-(imidazol-4-yl)-2-oxopropyl phosphate + H2O. Its pathway is amino-acid biosynthesis; L-histidine biosynthesis; L-histidine from 5-phospho-alpha-D-ribose 1-diphosphate: step 6/9. The polypeptide is Imidazoleglycerol-phosphate dehydratase (Methanosarcina barkeri (strain Fusaro / DSM 804)).